We begin with the raw amino-acid sequence, 988 residues long: Band 4.1-like protein 2 (988 aa).

Positions 1-190 (MTTEVGSASE…GAAKRETKEV (190 aa)) are disordered. N-acetylthreonine is present on threonine 2. A Phosphoserine modification is found at serine 7. Positions 22-31 (ASKEKAKEVE) are enriched in basic and acidic residues. Serine 38, serine 86, and serine 116 each carry phosphoserine. Composition is skewed to basic and acidic residues over residues 110-148 (ILGK…EAKP) and 160-190 (EEVR…TKEV). Serine 201, serine 379, serine 395, serine 492, serine 543, serine 555, serine 561, and serine 582 each carry phosphoserine. The FERM domain maps to 211 to 492 (VLAKVTLLDG…EHHTFYRLVS (282 aa)). A hydrophilic region spans residues 495-651 (QPPKTKFLTL…TPEPRPSEWE (157 aa)). A disordered region spans residues 514–594 (TQAQTREAST…KATPLPAEGK (81 aa)). A compositionally biased stretch (low complexity) spans 555–567 (SPPGEGSVPGPGV). Phosphotyrosine is present on tyrosine 606. A phosphoserine mark is found at serine 610 and serine 630. 2 disordered regions span residues 639–788 (MAST…QAGA) and 804–839 (QKLP…VPHL). Residues 652–837 (KRRVTPLPFQ…DPHRVNGEVP (186 aa)) form a spectrin--actin-binding region. Positions 673-686 (VEEKKRAEVGKDES) are enriched in basic and acidic residues. At serine 698 the chain carries Phosphoserine. Positions 704 to 717 (GETRKVEPVAHKDS) are enriched in basic and acidic residues. Over residues 718–729 (TSLSSESSSSSS) the composition is skewed to low complexity. Positions 739–751 (QPHHRVTEGTIRE) are enriched in basic and acidic residues. Position 745 is a phosphothreonine (threonine 745). The segment covering 752–764 (EQEECDEELEEEP) has biased composition (acidic residues). Positions 828-839 (DPHRVNGEVPHL) are enriched in basic and acidic residues. Residues 838-988 (HLDLDGLPEI…ETELAEEGEE (151 aa)) form a C-terminal (CTD) region.

Interacts with FCGR1A. Interacts with TRPC4. Interacts (via CTD domain) with FKBP2. Interacts with NUMA1; this interaction is negatively regulated by CDK1 during metaphase and promotes anaphase-specific localization of NUMA1 in symmetrically dividing cells. As to expression, widely expressed.

The protein localises to the cytoplasm. It is found in the cytoskeleton. It localises to the cell cortex. Its subcellular location is the cell membrane. Its function is as follows. Required for dynein-dynactin complex and NUMA1 recruitment at the mitotic cell cortex during anaphase. In Mus musculus (Mouse), this protein is Band 4.1-like protein 2.